The chain runs to 882 residues: Alanine--tRNA ligase (882 aa).

4 residues coordinate Zn(2+): H571, H575, C673, and H677.

The protein belongs to the class-II aminoacyl-tRNA synthetase family. Zn(2+) is required as a cofactor.

The protein resides in the cytoplasm. The catalysed reaction is tRNA(Ala) + L-alanine + ATP = L-alanyl-tRNA(Ala) + AMP + diphosphate. Functionally, catalyzes the attachment of alanine to tRNA(Ala) in a two-step reaction: alanine is first activated by ATP to form Ala-AMP and then transferred to the acceptor end of tRNA(Ala). Also edits incorrectly charged Ser-tRNA(Ala) and Gly-tRNA(Ala) via its editing domain. This chain is Alanine--tRNA ligase, found in Stenotrophomonas maltophilia (strain K279a).